We begin with the raw amino-acid sequence, 561 residues long: MQIQSFYHSASLKTQEAFKSLQKTLYNGMQILSGQGKAPAKAPDARPEIIVLREPGATWGNYLQHQKASNHSLHNLYNLQRDLLTVAATVLGKQDPVLTSMANQMELAKVKADRPATKQEEAAAKALKKNLIELIAARTQQQDGLPAKEAHRFAAVAFRDAQVKQLNNQPWQTIKNTLTHNGHHYTNTQLPAAEMKIGAKDIFPSAYEGKGVCSWDTKNIHHANNLWMSTVSVHEDGKDKTLFCGIRHGVLSPYHEKDPLLRHVGAENKAKEVLTAALFSKPELLNKALAGEAVSLKLVSVGLLTASNIFGKEGTMVEDQMRAWQSLTQPGKMIHLKIRNKDGDLQTVKIKPDVAAFNVGVNELALKLGFGLKASDSYNAEALHQLLGNDLRPEARPGGWVGEWLAQYPDNYEVVNTLARQIKDIWKNNQHHKDGGEPYKLAQRLAMLAHEIDAVPAWNCKSGKDRTGMMDSEIKREIISLHQTHMLSAPGSLPDSGGQKIFQKVLLNSGNLEIQKQNTGGAGNKVMKNLSPEVLNLSYQKRVGDENIWQSVKGISSLITS.

Residue C460 is part of the active site. The CX5R motif signature appears at 460-466 (CKSGKDR).

It belongs to the phosphatase IpgD/SopB family.

Its subcellular location is the secreted. Its function is as follows. Converts phosphatidylinositol 3,4,5-trisphosphate (PtdIns 3,4,5-P3) to PtdIns 3-P and prevents the transition of PtdIns 3-P to PtdIns 3,5-P2. It is one of the known effectors injected by Salmonella into the host cell and is required for invasion and for an efficient generation and maintenance of Salmonella-containing vacuole (SVC). Alteration of the phosphoinositide composition of the plasma membrane causes membrane ruffling and actin cytoskeleton rearrangements. The persistence of PtdIns 3-P diverts the SCV from the endocytic pathway resulting in enlarged vesicles, which are essential to create a favorable environment where Salmonella can replicate and avoid immune defenses of the host cell. This Salmonella typhimurium (strain LT2 / SGSC1412 / ATCC 700720) protein is Inositol phosphate phosphatase SopB (sopB).